Consider the following 346-residue polypeptide: Uracil-DNA glycosylase (346 aa).

A disordered region spans residues 1–105 (MSGKITDFFE…KLKNEEKSEE (105 aa)). Residues 20-29 (AENKDNDKEL) show a composition bias toward basic and acidic residues. Over residues 30–42 (TSTTTTTTTTSTT) the composition is skewed to low complexity. A compositionally biased stretch (basic residues) spans 43–64 (SKKKVAAAPKKKAAVASKKRKH). Positions 67–86 (SDEETDKEEQQNDDDDDGEE) are enriched in acidic residues. Catalysis depends on D186, which acts as the Proton acceptor.

The protein belongs to the uracil-DNA glycosylase (UDG) superfamily. UNG family.

The protein resides in the mitochondrion. It is found in the nucleus. It carries out the reaction Hydrolyzes single-stranded DNA or mismatched double-stranded DNA and polynucleotides, releasing free uracil.. Its function is as follows. Excises uracil residues from the DNA which can arise as a result of misincorporation of dUMP residues by DNA polymerase or due to deamination of cytosine. In Dictyostelium discoideum (Social amoeba), this protein is Uracil-DNA glycosylase (uglA).